Here is a 244-residue protein sequence, read N- to C-terminus: DNA repair protein RecO (244 aa).

The protein belongs to the RecO family.

Involved in DNA repair and RecF pathway recombination. In Jannaschia sp. (strain CCS1), this protein is DNA repair protein RecO.